We begin with the raw amino-acid sequence, 431 residues long: Chaperone SurA (431 aa).

Positions M1–A20 are cleaved as a signal peptide. 2 PpiC domains span residues Q171–D272 and V281–D381.

The protein localises to the periplasm. The enzyme catalyses [protein]-peptidylproline (omega=180) = [protein]-peptidylproline (omega=0). Its function is as follows. Chaperone involved in the correct folding and assembly of outer membrane proteins. Recognizes specific patterns of aromatic residues and the orientation of their side chains, which are found more frequently in integral outer membrane proteins. May act in both early periplasmic and late outer membrane-associated steps of protein maturation. This Pseudoalteromonas atlantica (strain T6c / ATCC BAA-1087) protein is Chaperone SurA.